The sequence spans 187 residues: MAISKPPPLHFTFFHNQDSSIDTSDSNLALSIDTSRRRRDVLLTISGTLIPQLFFFDRKRSSSANAADFFNFGAPPPEPERTVELAQEGLRKNAENIKRIKEIMIEKKLWKEGGKELRRSASNMKQDFYLIIQAKPPKDRPLFRSLYSSLFNSITKMDYAARDGDETKVLEYYINIVAILDDIFPRI.

The transit peptide at 1 to 32 (MAISKPPPLHFTFFHNQDSSIDTSDSNLALSI) directs the protein to the chloroplast. Residues 33 to 60 (DTSRRRRDVLLTISGTLIPQLFFFDRKR) constitute a thylakoid transit peptide.

The protein belongs to the PsbQ family. As to quaternary structure, subunit of the lumenal protuberance of the NDH complex.

The protein resides in the plastid. The protein localises to the chloroplast thylakoid membrane. In terms of biological role, required for both formation and activity of the chloroplast NAD(P)H dehydrogenase (NDH) complex. This is PsbQ-like protein 3, chloroplastic (PQL3) from Arabidopsis thaliana (Mouse-ear cress).